A 1752-amino-acid chain; its full sequence is Chitin synthase E (1752 aa).

1 to 8 (GESGSGKT) lines the ATP pocket. Residues 492-520 (SSKPLRMPSMARRKTSPSSRLAFDAGDAD) form a disordered region. The segment at 558–582 (LDIVNKCLSSTNLNPYFIFCLKPND) is actin-binding. A run of 2 helical transmembrane segments spans residues 789–809 (WIAL…KLFG) and 828–848 (LIIW…PGLV). The Cytochrome b5 heme-binding domain maps to 852 to 940 (QHVYSAAELS…LLDYRPTNIS (89 aa)). Residues N938 and N963 are each glycosylated (N-linked (GlcNAc...) asparagine). The helical transmembrane segment at 1099-1119 (FILAISVLICSIIVFKFLAAL) threads the bilayer. 3 N-linked (GlcNAc...) asparagine glycosylation sites follow: N1322, N1356, and N1462. The next 3 helical transmembrane spans lie at 1494 to 1514 (LSTV…YWLV), 1520 to 1540 (IPYT…LIFI), and 1547 to 1567 (MVGW…PCPS). N-linked (GlcNAc...) asparagine glycosylation is present at N1685. Residues 1689 to 1744 (LPSDDAILAEIREILRTADLMSVTKKSIKLELERAFGVNLDLKRPYINSGKGYTFP) form the DEK-C domain.

The protein in the N-terminal section; belongs to the TRAFAC class myosin-kinesin ATPase superfamily. Myosin family. This sequence in the C-terminal section; belongs to the chitin synthase family. Class V subfamily.

It localises to the cell membrane. The protein resides in the cell septum. It is found in the cell tip. The enzyme catalyses [(1-&gt;4)-N-acetyl-beta-D-glucosaminyl](n) + UDP-N-acetyl-alpha-D-glucosamine = [(1-&gt;4)-N-acetyl-beta-D-glucosaminyl](n+1) + UDP + H(+). Functionally, polymerizes chitin, a structural polymer of the cell wall and septum, by transferring the sugar moiety of UDP-GlcNAc to the non-reducing end of the growing chitin polymer. Important for hyphal growth and conidiophore development but not pathogenicity. This is Chitin synthase E from Aspergillus fumigatus (Neosartorya fumigata).